The chain runs to 382 residues: Succinate--CoA ligase [ADP-forming] subunit beta (382 aa).

The region spanning 9-240 (KELFSKYGVK…PRDVSEFEMY (232 aa)) is the ATP-grasp domain. ATP contacts are provided by residues Lys45, 52–54 (GRG), Val94, and Glu99. Mg(2+) contacts are provided by Asn193 and Asp207. Substrate contacts are provided by residues Asn260 and 317 to 319 (GIT).

The protein belongs to the succinate/malate CoA ligase beta subunit family. As to quaternary structure, heterotetramer of two alpha and two beta subunits. Mg(2+) serves as cofactor.

The catalysed reaction is succinate + ATP + CoA = succinyl-CoA + ADP + phosphate. The enzyme catalyses GTP + succinate + CoA = succinyl-CoA + GDP + phosphate. The protein operates within carbohydrate metabolism; tricarboxylic acid cycle; succinate from succinyl-CoA (ligase route): step 1/1. Its function is as follows. Succinyl-CoA synthetase functions in the citric acid cycle (TCA), coupling the hydrolysis of succinyl-CoA to the synthesis of either ATP or GTP and thus represents the only step of substrate-level phosphorylation in the TCA. The beta subunit provides nucleotide specificity of the enzyme and binds the substrate succinate, while the binding sites for coenzyme A and phosphate are found in the alpha subunit. The sequence is that of Succinate--CoA ligase [ADP-forming] subunit beta from Pyrobaculum arsenaticum (strain DSM 13514 / JCM 11321 / PZ6).